Reading from the N-terminus, the 669-residue chain is RNA-binding protein 14 (669 aa).

RRM domains lie at Met1–Pro73 and Trp79–Lys149. Glycyl lysine isopeptide (Lys-Gly) (interchain with G-Cter in SUMO2) cross-links involve residues Lys126, Lys135, Lys138, Lys149, and Lys153. 2 disordered regions span residues Ser147–Phe175 and Asn193–Ala232. The residue at position 161 (Ser161) is a Phosphoserine. Lys164 bears the N6-acetyllysine; alternate mark. Lys164 is covalently cross-linked (Glycyl lysine isopeptide (Lys-Gly) (interchain with G-Cter in SUMO2); alternate). The residue at position 206 (Thr206) is a Phosphothreonine. Residues Ser220, Ser242, Ser244, Ser256, Ser272, and Ser280 each carry the phosphoserine modification. The disordered stretch occupies residues Pro284–Gly303. Residues Gly287–Gly303 are compositionally biased toward low complexity. Residues Gly307 to Ser354 form a TRBP-interacting domain; interaction with STIL region. Phosphoserine occurs at positions 520, 523, 527, and 562. The tract at residues Val566–Asp590 is disordered. Position 572 is a phosphothreonine (Thr572). Ser582 is modified (phosphoserine). A Glycyl lysine isopeptide (Lys-Gly) (interchain with G-Cter in SUMO2) cross-link involves residue Lys600. Phosphoserine is present on residues Ser618, Ser620, Ser623, Ser627, Ser643, and Ser649.

Isoform 1: Interacts with NCOA6, CITED1 and XRCC5/KU86. Isoform 1: Interacts with SS18 isoform 1. Isoform 1: Interacts with SS18 isoform 2. Interacts with STIL and interferes with its interaction with CPAP. Interacts with gamma-tubulin. Part of the HDP-RNP complex composed of at least HEXIM1, PRKDC, XRCC5, XRCC6, paraspeckle proteins (SFPQ, NONO, PSPC1, RBM14, and MATR3) and NEAT1 RNA. Interacts with RBPMS; the interaction allows cooperative assembly of RNA-bound stable cell-specific alternative splicing regulatory complexes. In terms of tissue distribution, expressed in all tissues tested, including brain, heart, skeletal muscle, colon, thymus, spleen, kidney, liver, small intestine, placenta, lung and peripheral blood lymphocytes.

Its subcellular location is the nucleus. It localises to the nucleolus. It is found in the cytoplasm. In terms of biological role, isoform 1 may function as a nuclear receptor coactivator, enhancing transcription through other coactivators such as NCOA6 and CITED1. Isoform 2, functions as a transcriptional repressor, modulating transcriptional activities of coactivators including isoform 1, NCOA6 and CITED1. Regulates centriole biogenesis by suppressing the formation of aberrant centriolar protein complexes in the cytoplasm and thus preserving mitotic spindle integrity. Prevents the formation of the STIL-CPAP complex (which can induce the formation of aberrant centriolar protein complexes) by interfering with the interaction of STIL with CPAP. Plays a role in the regulation of DNA virus-mediated innate immune response by assembling into the HDP-RNP complex, a complex that serves as a platform for IRF3 phosphorylation and subsequent innate immune response activation through the cGAS-STING pathway. Also involved in the regulation of pre-mRNA alternative splicing. In Homo sapiens (Human), this protein is RNA-binding protein 14 (RBM14).